The sequence spans 637 residues: Palmitoyltransferase Hip14 (637 aa).

Over 1–295 the chain is Cytoplasmic; the sequence is MYQSACQAAT…SKLRHDKRLR (295 aa). ANK repeat units lie at residues 77 to 106, 111 to 140, 144 to 173, 177 to 207, and 212 to 242; these read ETVTLLHWAAINNRRDIIRYFLEKGATVDA, LNATPLHWATRQGHLGAVVLLMAAGADPRI, EGCSCIHIAAQFAHTALVAYFIAKGVDPDL, GGMTALMWAAWKVCALDPVRLLLTLGANPAM, and HGNTALHWAILARNATAISTLVLKSKASLDV. Residues 296–315 traverse the membrane as a helical segment; that stretch reads WWSMVACPFTAFYLAGIVFT. Residues 316-318 lie on the Lumenal side of the membrane; that stretch reads VNT. A helical transmembrane segment spans residues 319 to 341; it reads LYIIKFFLLGCLYSIFHTIGKAL. The Cytoplasmic portion of the chain corresponds to 342–345; the sequence is FDEH. A helical transmembrane segment spans residues 346–366; it reads LMALLPLSVYLATKAWFYVTW. The Lumenal segment spans residues 367–373; the sequence is LMYIDDA. A helical membrane pass occupies residues 374 to 394; it reads VSFTATVCFLISSLLLWVCFL. At 395-472 the chain is on the cytoplasmic side; the sequence is KSWKGDPGII…VGNCIGLKNH (78 aa). Residues 430–480 enclose the DHHC domain; that stretch reads SFCSGCLVRRPIRSKHCSVCDRCVARFDHHCPWVGNCIGLKNHSYFMGFLW. The active-site S-palmitoyl cysteine intermediate is cysteine 460. A helical membrane pass occupies residues 473 to 493; the sequence is SYFMGFLWMLLIMCAWMLYGG. Residues 494 to 520 are Lumenal-facing; the sequence is SKYYVNQCNVRFDDFLGAMRAIGNCDA. Residues 521–541 form a helical membrane-spanning segment; sequence WVGWVMGNALLHMSWVILLTI. Topologically, residues 542–637 are cytoplasmic; the sequence is CQTYQVICLG…DGMAGDHQYV (96 aa).

The protein belongs to the DHHC palmitoyltransferase family. AKR/ZDHHC17 subfamily. As to quaternary structure, interacts with dorsal-ventral patterning protein Sog. In stage 13-15 embryos, expressed in the central nervous system. At the third instar larval stage, expressed in the ventral nerve cord and is enriched in the neuropil.

The protein resides in the golgi apparatus membrane. It localises to the presynaptic cell membrane. It catalyses the reaction L-cysteinyl-[protein] + hexadecanoyl-CoA = S-hexadecanoyl-L-cysteinyl-[protein] + CoA. Probable palmitoyltransferase which is required for photoreceptor synaptic transmission and for the correct expression and localization of palmitoylated protein Csp and synaptosomal-associated protein Snap25. Probably palmitoylates Csp. Probably also palmitoylates the dorsal-ventral patterning protein Sog and promotes its secretion and activity and the stabilization of the membrane-bound form. Required for synaptic vesicle exocytosis. The chain is Palmitoyltransferase Hip14 from Drosophila melanogaster (Fruit fly).